The chain runs to 566 residues: MLQRSPRAGPSRAQGRREAAETGGPTTQEGVACGVHQLATLLMELDSEDEASRLLAADALYRLGRLEETHKALLVALSRRPQAAPVLARLALLQLRRGFFYDANQLVKKLVQSGDTACLQPTLDVFCHEDRQLLQGHCHARALAILRARPGGADGRVHTKEAIAYLSLAIFAAGSQASESLLARARCYGFLGQKKTAMFDFNTVLRAEPGNVQALCGRALVHLALDQLQEAVDDIVSALKLGPGTVVPELRSLKPEAQALITQGLYSHCRALLSQLPDTGAPLEDKDTQGLLAVGEALIKIDSGQPHWHLLLADILMAQGSYEEAGTHLEKALHRAPTSEAARARLGLLQLKKGDVPGAARDLQSLAEVDAPDLSCLLHLLEASERQSLAQAAAQEAGTLLDAGQPRQALGYCSLSVLASGSSACHLRLRATCLAELQEFGRALRDLDHVLQEALGDGDLPRRAEDFCRQGRLLLSLGDEAAAAGAFAQALKLAPSLAQNSLCRQPGRAPTARMFLLRGQCCLEEQRHAEAWTAVESGLLVDPDHRGLKRLKARIRREASSGCWLQ.

The interval 1-29 (MLQRSPRAGPSRAQGRREAAETGGPTTQE) is disordered. 8 TPR repeats span residues 50-83 (EASRLLAADALYRLGRLEETHKALLVALSRRPQA), 178-211 (SESLLARARCYGFLGQKKTAMFDFNTVLRAEPGN), 212-245 (VQALCGRALVHLALDQLQEAVDDIVSALKLGPGT), 306-339 (PHWHLLLADILMAQGSYEEAGTHLEKALHRAPTS), 341-373 (AARARLGLLQLKKGDVPGAARDLQSLAEVDAPD), 424-457 (ACHLRLRATCLAELQEFGRALRDLDHVLQEALGD), 464-497 (AEDFCRQGRLLLSLGDEAAAAGAFAQALKLAPSL), and 512-545 (ARMFLLRGQCCLEEQRHAEAWTAVESGLLVDPDH).

This chain is Tetratricopeptide repeat protein 34 (TTC34), found in Homo sapiens (Human).